The following is a 225-amino-acid chain: Peptidyl-tRNA hydrolase (225 aa).

Tyrosine 27 provides a ligand contact to tRNA. Catalysis depends on histidine 32, which acts as the Proton acceptor. Tyrosine 78, asparagine 80, and asparagine 126 together coordinate tRNA. The disordered stretch occupies residues 198-225; it reads FNPLDFSGPDRQDQPAPLNPAKTAPGES.

The protein belongs to the PTH family. Monomer.

It localises to the cytoplasm. The catalysed reaction is an N-acyl-L-alpha-aminoacyl-tRNA + H2O = an N-acyl-L-amino acid + a tRNA + H(+). Functionally, hydrolyzes ribosome-free peptidyl-tRNAs (with 1 or more amino acids incorporated), which drop off the ribosome during protein synthesis, or as a result of ribosome stalling. In terms of biological role, catalyzes the release of premature peptidyl moieties from peptidyl-tRNA molecules trapped in stalled 50S ribosomal subunits, and thus maintains levels of free tRNAs and 50S ribosomes. This chain is Peptidyl-tRNA hydrolase, found in Synechococcus sp. (strain JA-3-3Ab) (Cyanobacteria bacterium Yellowstone A-Prime).